The chain runs to 405 residues: Coiled-coil domain-containing protein 91 (405 aa).

The GGA1-binding motif stretch occupies residues 1–16 (MDDDDFGGFEAAETFD). Residues 1 to 27 (MDDDDFGGFEAAETFDGGNGETQTTSP) are disordered. Residues Ser-43 and Ser-46 each carry the phosphoserine modification. Residues 126–376 (GANVSNIQLR…QKRLDQVIRQ (251 aa)) are a coiled coil. The segment at 210–377 (LSIIVDEYKH…KRLDQVIRQR (168 aa)) is homodimerization.

In terms of assembly, homodimer. Interacts with GGA1, GGA2 and AP1G1.

The protein resides in the membrane. It is found in the golgi apparatus. The protein localises to the trans-Golgi network membrane. Its subcellular location is the trans-Golgi network. Involved in the regulation of membrane traffic through the trans-Golgi network (TGN). Functions in close cooperation with the GGAs in the sorting of hydrolases to lysosomes. The polypeptide is Coiled-coil domain-containing protein 91 (CCDC91) (Pongo abelii (Sumatran orangutan)).